A 165-amino-acid polypeptide reads, in one-letter code: MGVTKKPDLNDPVLRAKLAKGMGHNYYGEPAWPNDLLYIFPVVILGTIACNVGLAVLEPSMIGEPADPFATPLEILPEWYFFPVFQILRTVPNKLLGVLLMVSVPAGLLTVPFLENVNKFQNPFRRPVATTVFLIGTVVALWLGIGATLPIDKSLTLGLFQIDSI.

The next 3 membrane-spanning stretches (helical) occupy residues 36–56 (LLYI…GLAV), 95–115 (LLGV…PFLE), and 131–151 (TVFL…TLPI).

Belongs to the cytochrome b family. PetD subfamily. The 4 large subunits of the cytochrome b6-f complex are cytochrome b6, subunit IV (17 kDa polypeptide, petD), cytochrome f and the Rieske protein, while the 4 small subunits are petG, petL, petM and petN. The complex functions as a dimer.

Its subcellular location is the plastid. It localises to the chloroplast thylakoid membrane. Its function is as follows. Component of the cytochrome b6-f complex, which mediates electron transfer between photosystem II (PSII) and photosystem I (PSI), cyclic electron flow around PSI, and state transitions. This Populus alba (White poplar) protein is Cytochrome b6-f complex subunit 4.